The following is a 620-amino-acid chain: MHKPKLANAITAAAIASSISTKNNNNNSIVGGSSSSSSGGNKSKRPRQFGQYSIGVGTGAGAGGLLRSDDSGFDHLDYSSLIGDSIDLEHYISAMEARRHDQEPDVWAQLQQKESDILLAAELGKALLEKNEELVKQQEKLIEDYSSKIEKLEQEKHVLRQKLAIAEDESDQRVLELQSDLTELKDKLQTQDTAIRQAEKEKTILIDELQHQNTRLTEQIQEAHATELKLSAQIQELKDQYHYRNSSLQEHVNSLESIKTELNLTTGKRQELERRLQIAQEEKESLTSSLEESSDRIHMLERHAREQETKLETTLQALERSQRENNVLSERLGADTNSSTPGRKSLQFEMECDEDDGSYTETGKPNQMFVEARSVYIQLKSLVDSLKVSHDDDSGLNSDISLELESMDNTISSSERHEDGHLAIEFRQGMLSSMSDELTRLLLNLDAGNFKKMLDQTRNLVLEQEDEIKRSHQLIQQLEAKVTVTDVELQNVKEERDQARGDLEDNTDRDELLSKAQTERDAANDRRTKAEVELAKTRVELMQANSQLLESIQQKVELSQQLEQWQMDMHELIDEQMRSKLINNRRAMAAESSAPSPPSSAAANLAKRVTSYKLWSLFQR.

Residues 23 to 41 show a composition bias toward low complexity; the sequence is NNNNNSIVGGSSSSSSGGN. Residues 23 to 53 form a disordered region; the sequence is NNNNNSIVGGSSSSSSGGNKSKRPRQFGQYS. Coiled-coil stretches lie at residues 120–331 and 461–575; these read AAEL…LSER and VLEQ…LIDE. Composition is skewed to basic and acidic residues over residues 493 to 503 and 509 to 528; these read KEERDQARGDL and RDEL…DRRT. The interval 493–528 is disordered; the sequence is KEERDQARGDLEDNTDRDELLSKAQTERDAANDRRT.

This sequence belongs to the BICDR family. May homodimerize but does not interact with BicD. May interact with eEF1gamma; The interaction is probably indirect.

In terms of biological role, functions redundantly with BicD. Involved in formation and/or development of mechanosensory organs during metamorphosis. During macrochaetae development, together with BicD, involved in Rab 6 and Spn-F stability and distribution and actin cytoskeleton organization. The chain is Bicaudal D-related protein homolog from Drosophila melanogaster (Fruit fly).